An 833-amino-acid polypeptide reads, in one-letter code: Multiple RNA-binding domain-containing protein 1 (833 aa).

The RRM 1 domain occupies 2–83 (SRIIIKNIPR…SRIEVHRALD (82 aa)). Residues 160–251 (ENEEVFDTEI…DAQAPLSDDE (92 aa)) form a disordered region. Basic and acidic residues-rich tracts occupy residues 188–205 (AAKR…HDST) and 213–222 (DGREKSSSEL). RRM domains are found at residues 323-401 (KRLF…PAKA), 506-578 (NVLL…KAPR), 619-702 (ATIY…LSHQ), and 721-798 (TKIL…YASN).

This sequence belongs to the RRM MRD1 family.

It localises to the nucleus. Functionally, involved in pre-rRNA processing. This Schizosaccharomyces pombe (strain 972 / ATCC 24843) (Fission yeast) protein is Multiple RNA-binding domain-containing protein 1 (mrd1).